The primary structure comprises 511 residues: V-type proton ATPase subunit B, brain isoform (511 aa).

R400 is a binding site for ATP.

Belongs to the ATPase alpha/beta chains family. As to quaternary structure, V-ATPase is a heteromultimeric enzyme made up of two complexes: the ATP-hydrolytic V1 complex and the proton translocation V0 complex. The V1 complex consists of three catalytic AB heterodimers that form a heterohexamer, three peripheral stalks each consisting of EG heterodimers, one central rotor including subunits D and F, and the regulatory subunits C and H. The proton translocation complex V0 consists of the proton transport subunit a, a ring of proteolipid subunits c9c'', rotary subunit d, subunits e and f, and the accessory subunits ATP6AP1/Ac45 and ATP6AP2/PRR. Kidney; found in early distal nephron, encompassing thick ascending limbs and distal convoluted tubules and in the alpha-intercalated cells of the cortical collecting ducts (at protein level). Expressed in epididymal clear cells (at protein level). Mainly expressed in the organ of Corti and spiral ganglion neurons, in both the early postnatal cochlea (P2) and the adult cochlea (P30).

The protein resides in the apical cell membrane. The protein localises to the melanosome. It localises to the cytoplasm. Its subcellular location is the cytoplasmic vesicle. It is found in the secretory vesicle. The protein resides in the synaptic vesicle membrane. The protein localises to the clathrin-coated vesicle membrane. Its function is as follows. Non-catalytic subunit of the V1 complex of vacuolar(H+)-ATPase (V-ATPase), a multisubunit enzyme composed of a peripheral complex (V1) that hydrolyzes ATP and a membrane integral complex (V0) that translocates protons. V-ATPase is responsible for acidifying and maintaining the pH of intracellular compartments and in some cell types, is targeted to the plasma membrane, where it is responsible for acidifying the extracellular environment. In renal intercalated cells, can partially compensate the lack of ATP6V1B1 and mediate secretion of protons (H+) into the urine under base-line conditions but not in conditions of acid load. The protein is V-type proton ATPase subunit B, brain isoform (Atp6v1b2) of Mus musculus (Mouse).